The primary structure comprises 319 residues: MNFNINILGTGGTRPLHNRYLTSVLIEYHGESFLFDCGEATQMSLRKQKISWQKIKVICITHLHADHITGLLGIVMLMAQSGDTRKEPLTIIGPIGIKKYLDANIELLRVHKNYDIIYKEIIINKTEPILYEDKKKRIEYIKLKHSIECVGYLFIEKDKPGKFNTQKAESLNIPKGPIRKTLQEGHEVILNGKKILPSEILGESQKGLKFAYITDTAYFEELSTHIKNFNLVIIESTFKNDLKDEAKKKLHLTAKLAAKITKKANVYQTGLIHFSERYTLNKDLCELLDEAQQEYPNGEIFLTKDGMRLKANKDKFIIK.

Zn(2+) contacts are provided by H62, H64, D66, H67, H145, D215, and H273. Residue D66 is the Proton acceptor of the active site.

This sequence belongs to the RNase Z family. Homodimer. The cofactor is Zn(2+).

It catalyses the reaction Endonucleolytic cleavage of RNA, removing extra 3' nucleotides from tRNA precursor, generating 3' termini of tRNAs. A 3'-hydroxy group is left at the tRNA terminus and a 5'-phosphoryl group is left at the trailer molecule.. Functionally, zinc phosphodiesterase, which displays some tRNA 3'-processing endonuclease activity. Probably involved in tRNA maturation, by removing a 3'-trailer from precursor tRNA. In Borrelia hermsii (strain HS1 / DAH), this protein is Ribonuclease Z.